A 569-amino-acid chain; its full sequence is Phosphatase and actin regulator 2 (569 aa).

Residues 1–13 (MGQTSVSALSPQP) show a composition bias toward polar residues. The tract at residues 1–47 (MGQTSVSALSPQPGSVDGLDKASIANSDGPPAGSQTPPFKRKGKLST) is disordered. The residue at position 27 (serine 27) is a Phosphoserine. Threonine 36 carries the phosphothreonine modification. Residues 71–96 (AVLERKISTRQSREELIRRGLLKELP) form an RPEL 1 repeat. Disordered regions lie at residues 98–253 (QDGD…TGKP) and 295–483 (PTLP…QEAK). Residues 140-151 (GPPREEQAEEKT) show a composition bias toward basic and acidic residues. Residues 162 to 176 (GSKASSSPSASSTSS) are compositionally biased toward low complexity. Residues 212-224 (LSPNTVTSETSSL) show a composition bias toward polar residues. At serine 357 the chain carries Phosphoserine. The segment covering 386–399 (TDDDDEEDDDDDST) has biased composition (acidic residues). RPEL repeat units lie at residues 412-437 (DTLA…QRTS), 450-475 (TKLV…KQKN), and 488-513 (RRLS…RFNE). Basic and acidic residues predominate over residues 423 to 444 (SKKELEDKNILQRTSEEERQEL). Serine 457 is modified (phosphoserine). Over residues 461–483 (TTEELEQRSILKQKNEEEEQEAK) the composition is skewed to basic and acidic residues. Position 495 is a phosphoserine (serine 495).

This sequence belongs to the phosphatase and actin regulator family. Binds PPP1CA and actin. Expressed in the brain with high levels in the cerebellum, specifically in the Purkinje cell layer, choroid plexus and thalamus (ventral, rhomboid and anterior nuclei). Moderate to high expression in the hippocampus, piriform cortex, olfactory bulb, entorhinal cortex, as well as in geniculate bodies, lamboid septal zone, preoptic area and ventral pallidum (at protein level).

The protein is Phosphatase and actin regulator 2 (Phactr2) of Rattus norvegicus (Rat).